We begin with the raw amino-acid sequence, 547 residues long: Protein RBL (547 aa).

WD repeat units lie at residues 21 to 60 (LEHG…IAKE), 65 to 104 (DCSA…KIAR), 214 to 253 (SGAA…KNVL), 285 to 332 (EFQD…VKIL), and 334 to 373 (GPKE…NWSA). A disordered region spans residues 466 to 547 (SPASEEAGQN…GGDDDDDAYY (82 aa)). Residues 499–511 (SEKAMELQAEKAK) show a composition bias toward basic and acidic residues. Over residues 530 to 547 (QETDDSINGGDDDDDAYY) the composition is skewed to acidic residues.

As to quaternary structure, part of a complex composed of TRO, RBL and WDR5A. Interacts with TRO and WDR5A, but not with WDR5B. This complex is formed during both vegetative and reproductive development. As to expression, strongly expressed in root tips, shoot apices, vascular tissues, developing embryos and endosperms.

It localises to the nucleus. Functionally, promotes the expression of FLC and FLC homologs to repress the floral transition. Promotes WRKY70 and LTP7 genes epigenetic methylation (e.g. H3K4me3) and subsequent expression. The chain is Protein RBL from Arabidopsis thaliana (Mouse-ear cress).